A 258-amino-acid polypeptide reads, in one-letter code: Ubiquinone/menaquinone biosynthesis C-methyltransferase UbiE (258 aa).

S-adenosyl-L-methionine-binding positions include threonine 83, aspartate 104, and 130 to 131 (DA).

Belongs to the class I-like SAM-binding methyltransferase superfamily. MenG/UbiE family.

The enzyme catalyses a 2-demethylmenaquinol + S-adenosyl-L-methionine = a menaquinol + S-adenosyl-L-homocysteine + H(+). It carries out the reaction a 2-methoxy-6-(all-trans-polyprenyl)benzene-1,4-diol + S-adenosyl-L-methionine = a 5-methoxy-2-methyl-3-(all-trans-polyprenyl)benzene-1,4-diol + S-adenosyl-L-homocysteine + H(+). The protein operates within quinol/quinone metabolism; menaquinone biosynthesis; menaquinol from 1,4-dihydroxy-2-naphthoate: step 2/2. It participates in cofactor biosynthesis; ubiquinone biosynthesis. Methyltransferase required for the conversion of demethylmenaquinol (DMKH2) to menaquinol (MKH2) and the conversion of 2-polyprenyl-6-methoxy-1,4-benzoquinol (DDMQH2) to 2-polyprenyl-3-methyl-6-methoxy-1,4-benzoquinol (DMQH2). The polypeptide is Ubiquinone/menaquinone biosynthesis C-methyltransferase UbiE (Bordetella bronchiseptica (strain ATCC BAA-588 / NCTC 13252 / RB50) (Alcaligenes bronchisepticus)).